A 388-amino-acid chain; its full sequence is Aldolase vrtJ (388 aa).

Lysine 241 bears the N6-(pyridoxal phosphate)lysine mark.

The protein belongs to the threonine aldolase family. Pyridoxal 5'-phosphate serves as cofactor.

It functions in the pathway secondary metabolite biosynthesis; terpenoid biosynthesis. Its function is as follows. Aldolase; part of the gene cluster that mediates the biosynthesis of viridicatumtoxin, a tetracycline-like fungal meroterpenoid with a unique, fused spirobicyclic ring system. The first step of the pathway is the production of the malonamoyl-CoA starter unit for the polyketide synthase vrtA. The aldolase vrtJ may be involved in the synthesis of the malonamate substrate for malonamoyl-CoA synthetase vrtB. The polyketide synthase vrtA then may utilize the malonamoyl-CoA starter unit, followed by sequential condensation of eight malonyl-CoA units to form the polyketide backbone. The cyclization of the last ring could be mediated by the lactamase-like protein vrtG. The proposed post-PKS tailoring steps are a hydroxylation at C5 catalyzed the cytochrome P450 monooxygenase vrtE, a hydroxylation at C12a catalyzed by VrtH and/or VrtI, and an O-methylation by the O-methyltransferase vrtF. VrtC is then proposed to catalyze the transfer of a geranyl group synthesized by vrtD to the aromatic C ring of the tetracyclic polyketide intermediate of viridicatumtoxin to yield previridicatumtoxin. Finally, the cytochrome P450 monooxygenase vrtK catalyzes the spirocyclization of the geranyl moiety of previridicatumtoxin to afford viridicatumtoxin. In Penicillium aethiopicum, this protein is Aldolase vrtJ.